The following is a 250-amino-acid chain: MPNDNRLAPAALAAQAAALPAAWRHVLEQPAVARAFASVLGHVEQRLAEGAVVYPATPFRALDQLAPADVRVVILGQDPYHGPGQAQGLAFSVPDDCKCPPSLRNIFNEIAVDYPRPTRHDLSAWTRQGVLLLNTSLTVEDGQPGSHAKRGWETVTDALIAEVARDPSPKVFLLWGAHAQAKQALVPADAGHLVLAANHPSPLSARRPPVPFVGCGHFRQTNAWLQQRGQKPVDWSGEQNNASRQGKFAL.

Asp78 functions as the Proton acceptor in the catalytic mechanism. Residues 228 to 250 (RGQKPVDWSGEQNNASRQGKFAL) form a disordered region.

Belongs to the uracil-DNA glycosylase (UDG) superfamily. UNG family.

It is found in the cytoplasm. The catalysed reaction is Hydrolyzes single-stranded DNA or mismatched double-stranded DNA and polynucleotides, releasing free uracil.. Its function is as follows. Excises uracil residues from the DNA which can arise as a result of misincorporation of dUMP residues by DNA polymerase or due to deamination of cytosine. The protein is Uracil-DNA glycosylase of Bordetella bronchiseptica (strain ATCC BAA-588 / NCTC 13252 / RB50) (Alcaligenes bronchisepticus).